The chain runs to 486 residues: Triplex capsid protein 1 (486 aa).

The protein belongs to the herpesviridae TRX1 protein family. In terms of assembly, interacts with TRX2, MCP and capsid vertex component 2/CVC2.

Its subcellular location is the virion. It localises to the host nucleus. In terms of biological role, structural component of the T=16 icosahedral capsid. The capsid is composed of pentamers and hexamers of major capsid protein/MCP, which are linked together by heterotrimers called triplexes. These triplexes are formed by a single molecule of triplex protein 1/TRX1 and two copies of triplex protein 2/TRX2. Additionally, TRX1 is required for efficient transport of TRX2 to the nucleus, which is the site of capsid assembly. The polypeptide is Triplex capsid protein 1 (Psittacid herpesvirus 1 (isolate Amazon parrot/-/97-0001/1997) (PsHV-1)).